Reading from the N-terminus, the 1230-residue chain is ATP-dependent helicase/nuclease subunit A (1230 aa).

The 471-residue stretch at 3–473 (TKFTKNQQRA…IDLADNFRSQ (471 aa)) folds into the UvrD-like helicase ATP-binding domain. 24-31 (ASAGSGKT) contacts ATP. The 283-residue stretch at 500–782 (EAKLVPKAAY…RIMTIHASKG (283 aa)) folds into the UvrD-like helicase C-terminal domain.

This sequence belongs to the helicase family. AddA subfamily. As to quaternary structure, heterodimer of AddA and AddB/RexB. The cofactor is Mg(2+).

It catalyses the reaction Couples ATP hydrolysis with the unwinding of duplex DNA by translocating in the 3'-5' direction.. It carries out the reaction ATP + H2O = ADP + phosphate + H(+). The heterodimer acts as both an ATP-dependent DNA helicase and an ATP-dependent, dual-direction single-stranded exonuclease. Recognizes the chi site generating a DNA molecule suitable for the initiation of homologous recombination. The AddA nuclease domain is required for chi fragment generation; this subunit has the helicase and 3' -&gt; 5' nuclease activities. This Leuconostoc mesenteroides subsp. mesenteroides (strain ATCC 8293 / DSM 20343 / BCRC 11652 / CCM 1803 / JCM 6124 / NCDO 523 / NBRC 100496 / NCIMB 8023 / NCTC 12954 / NRRL B-1118 / 37Y) protein is ATP-dependent helicase/nuclease subunit A.